A 40-amino-acid polypeptide reads, in one-letter code: Beta-glucosidase 1 (40 aa).

The enzyme catalyses Hydrolysis of terminal, non-reducing beta-D-glucosyl residues with release of beta-D-glucose.. The polypeptide is Beta-glucosidase 1 (Passalora fulva (Tomato leaf mold)).